A 376-amino-acid polypeptide reads, in one-letter code: Transmembrane protein 183A (376 aa).

Disordered stretches follow at residues 1–20 (MARG…AMPK) and 100–127 (MDAQ…ELDG). A helical membrane pass occupies residues 300 to 320 (LNFIFIPIVMGMIFTLFTINV).

This sequence belongs to the TMEM183 family.

It is found in the membrane. This is Transmembrane protein 183A (TMEM183A) from Homo sapiens (Human).